A 385-amino-acid polypeptide reads, in one-letter code: Acetate kinase (385 aa).

Asn9 contributes to the Mg(2+) binding site. Lys16 lines the ATP pocket. Residue Arg87 coordinates substrate. Catalysis depends on Asp144, which acts as the Proton donor/acceptor. ATP contacts are provided by residues 202–206 and 277–279; these read HLGSG and DMR. A Mg(2+)-binding site is contributed by Glu373.

Belongs to the acetokinase family. In terms of assembly, homodimer. Mg(2+) serves as cofactor. The cofactor is Mn(2+).

It localises to the cytoplasm. It catalyses the reaction acetate + ATP = acetyl phosphate + ADP. The protein operates within metabolic intermediate biosynthesis; acetyl-CoA biosynthesis; acetyl-CoA from acetate: step 1/2. In terms of biological role, catalyzes the formation of acetyl phosphate from acetate and ATP. Can also catalyze the reverse reaction. This is Acetate kinase from Rickettsia felis (strain ATCC VR-1525 / URRWXCal2) (Rickettsia azadi).